A 502-amino-acid polypeptide reads, in one-letter code: Probable cytosol aminopeptidase (502 aa).

2 residues coordinate Mn(2+): K269 and D274. K281 is an active-site residue. The Mn(2+) site is built by D292, D351, and E353. The active site involves R355.

It belongs to the peptidase M17 family. The cofactor is Mn(2+).

The protein resides in the cytoplasm. The catalysed reaction is Release of an N-terminal amino acid, Xaa-|-Yaa-, in which Xaa is preferably Leu, but may be other amino acids including Pro although not Arg or Lys, and Yaa may be Pro. Amino acid amides and methyl esters are also readily hydrolyzed, but rates on arylamides are exceedingly low.. It carries out the reaction Release of an N-terminal amino acid, preferentially leucine, but not glutamic or aspartic acids.. Presumably involved in the processing and regular turnover of intracellular proteins. Catalyzes the removal of unsubstituted N-terminal amino acids from various peptides. The sequence is that of Probable cytosol aminopeptidase from Photobacterium profundum (strain SS9).